Consider the following 387-residue polypeptide: Gibberellic acid methyltransferase 2 (387 aa).

Residue Tyr33 participates in S-adenosyl-L-homocysteine binding. Gln40 contacts gibberellin A4. Cys74, Asn79, Asp113, Leu114, Ser146, and Phe147 together coordinate S-adenosyl-L-homocysteine. 2 residues coordinate gibberellin A4: His167 and Trp168. Residues Asn185, Arg275, Asp276, Phe278, and Asn279 each coordinate Mg(2+).

This sequence belongs to the methyltransferase superfamily. Type-7 methyltransferase family. SABATH subfamily. Requires Mg(2+) as cofactor. Expressed in siliques and germinating seeds. Not detected in leaves, stems, flowers and roots.

The catalysed reaction is gibberellin A4 + S-adenosyl-L-methionine = O-methyl gibberellin A4 + S-adenosyl-L-homocysteine. Down-regulated by Zn(2+), Cu(2+) and Fe(3+). No effect of K(+), NH(4+), Na(+), Ca(2+), Mg(2+), Mn(2+) and Fe(2+). Methylates the carboxyl group of several gibberellins (GAs). Substrate preference is GA4 &gt; GA34 &gt; GA9 &gt; GA3 &gt; GA1 &gt; GA51 &gt; GA20. No activity with diterpenes abietic acid and ent-kaurenoic acid. The polypeptide is Gibberellic acid methyltransferase 2 (GAMT2) (Arabidopsis thaliana (Mouse-ear cress)).